The sequence spans 717 residues: DNA ligase (717 aa).

NAD(+) is bound by residues 44-48 (DADYD), 93-94 (SL), and Glu-127. Catalysis depends on Lys-129, which acts as the N6-AMP-lysine intermediate. 4 residues coordinate NAD(+): Arg-150, Glu-186, Lys-302, and Lys-326. 4 residues coordinate Zn(2+): Cys-431, Cys-434, Cys-455, and Cys-461. One can recognise a BRCT domain in the interval 639 to 717 (STDSPVAGKT…EDEWLALIGG (79 aa)).

The protein belongs to the NAD-dependent DNA ligase family. LigA subfamily. It depends on Mg(2+) as a cofactor. Requires Mn(2+) as cofactor.

The enzyme catalyses NAD(+) + (deoxyribonucleotide)n-3'-hydroxyl + 5'-phospho-(deoxyribonucleotide)m = (deoxyribonucleotide)n+m + AMP + beta-nicotinamide D-nucleotide.. Functionally, DNA ligase that catalyzes the formation of phosphodiester linkages between 5'-phosphoryl and 3'-hydroxyl groups in double-stranded DNA using NAD as a coenzyme and as the energy source for the reaction. It is essential for DNA replication and repair of damaged DNA. The protein is DNA ligase of Sinorhizobium fredii (strain NBRC 101917 / NGR234).